We begin with the raw amino-acid sequence, 321 residues long: Acetyl-coenzyme A carboxylase carboxyl transferase subunit alpha (321 aa).

One can recognise a CoA carboxyltransferase C-terminal domain in the interval 39–293 (RLEVKSQALT…KRALAEALRQ (255 aa)).

This sequence belongs to the AccA family. As to quaternary structure, acetyl-CoA carboxylase is a heterohexamer composed of biotin carboxyl carrier protein (AccB), biotin carboxylase (AccC) and two subunits each of ACCase subunit alpha (AccA) and ACCase subunit beta (AccD).

Its subcellular location is the cytoplasm. It carries out the reaction N(6)-carboxybiotinyl-L-lysyl-[protein] + acetyl-CoA = N(6)-biotinyl-L-lysyl-[protein] + malonyl-CoA. It functions in the pathway lipid metabolism; malonyl-CoA biosynthesis; malonyl-CoA from acetyl-CoA: step 1/1. Component of the acetyl coenzyme A carboxylase (ACC) complex. First, biotin carboxylase catalyzes the carboxylation of biotin on its carrier protein (BCCP) and then the CO(2) group is transferred by the carboxyltransferase to acetyl-CoA to form malonyl-CoA. The protein is Acetyl-coenzyme A carboxylase carboxyl transferase subunit alpha of Azoarcus sp. (strain BH72).